The following is a 334-amino-acid chain: L-lactate dehydrogenase C chain (334 aa).

NAD(+) is bound by residues 30–58, arginine 100, and asparagine 139; that span reads GQVG…LEDK. Asparagine 139 and arginine 170 together coordinate substrate. Catalysis depends on histidine 194, which acts as the Proton acceptor. Threonine 249 lines the substrate pocket.

Belongs to the LDH/MDH superfamily. LDH family. Homotetramer.

It localises to the cytoplasm. It carries out the reaction (S)-lactate + NAD(+) = pyruvate + NADH + H(+). Its pathway is fermentation; pyruvate fermentation to lactate; (S)-lactate from pyruvate: step 1/1. In Xenopus laevis (African clawed frog), this protein is L-lactate dehydrogenase C chain (ldhc).